We begin with the raw amino-acid sequence, 659 residues long: Interferon-induced GTP-binding protein Mx3 (659 aa).

In terms of domain architecture, Dynamin-type G spans 65–338 (DLALPAIAVI…LISHICKSLP (274 aa)). Residues 75 to 82 (GDQSSGKS) are G1 motif. 75–82 (GDQSSGKS) is a GTP binding site. Residues 100–102 (VTR) are G2 motif. Residues 176 to 179 (DLPG) are G3 motif. GTP contacts are provided by residues 176–180 (DLPGI) and 245–248 (TKPD). The G4 motif stretch occupies residues 245-248 (TKPD). Residues 277 to 280 (KCRG) form a G5 motif region. Residues 547 to 568 (EAEEEERKHGKSRSAQSPNLQT) form a disordered region. The segment covering 559 to 568 (RSAQSPNLQT) has biased composition (polar residues). Positions 571–659 (MDEIFQHLNA…AQRRLAKFPG (89 aa)) constitute a GED domain.

The protein belongs to the TRAFAC class dynamin-like GTPase superfamily. Dynamin/Fzo/YdjA family.

It localises to the cytoplasm. Functionally, does not show activity against influenza virus or VSV; although it only differs from Mx2 by 8 positions. The polypeptide is Interferon-induced GTP-binding protein Mx3 (Mx3) (Rattus norvegicus (Rat)).